Consider the following 173-residue polypeptide: MARVEL domain-containing protein 1 (173 aa).

The residue at position 1 (Met-1) is an N-acetylmethionine. Over Met-1–Ser-29 the chain is Cytoplasmic. Residues Phe-26–Cys-166 enclose the MARVEL domain. The chain crosses the membrane as a helical span at residues Pro-30–Ala-50. Over Thr-51–His-59 the chain is Extracellular. A helical transmembrane segment spans residues Phe-60–Leu-80. Residues Leu-81–Trp-94 are Cytoplasmic-facing. Residues Leu-95–Ile-115 traverse the membrane as a helical segment. Topologically, residues Met-116–His-138 are extracellular. A helical transmembrane segment spans residues Ala-139–Leu-159. Residues Tyr-160–Ala-173 lie on the Cytoplasmic side of the membrane.

As to expression, widely expressed in normal tissues. Down-regulated in multiple primary tumors.

Its subcellular location is the cell membrane. It is found in the cytoplasm. It localises to the cytoskeleton. The protein resides in the nucleus. In terms of biological role, microtubule-associated protein that exhibits cell cycle-dependent localization and can inhibit cell proliferation and migration. This is MARVEL domain-containing protein 1 (MARVELD1) from Homo sapiens (Human).